The following is a 599-amino-acid chain: MALSFRISSSSPLICRATLSNGDNSRNYHTTDAAFIRRAADLSEMSAGLTSPHPNFGCVIATSSGKVAGEGYLYAQGTKPAEALAVEAAGEFSRGATAYLNMEPGDCHGDHTAVSALVQAGIERVVVGIRHPLQHLRGSAIRELRSHGIEVNVLGEDFESKVLEDARKSCLLVNAPLIHRACSRVPFSVLKYAMTLDGKIAASSGHAAWISSKLSRTRVFELRGGSDAVIVGGNTVRQDDPRLTARHGQGHTPTRIVMTQSLDLPEKANLWDVSEVSTIVVTQRGARKSFQKLLASKGVEVVEFDMLNPREVMEYFHLRGYLSILWECGGTLAASAISSSVIHKVVAFVAPKIIGGSKAPSPVGDLGMVEMTQALNLIDVCYEQVGPDMLVSGFLQPIPDLLPVIPSEDATVEIDPSVDPFEPSIIFFYKTWDLYGMWNITIRYHTTVHVKWYLALSKKHNLLILHPKTLKANKFVGVENPKAYDCVEKIRTARSPEEAALIGRSTLRQKPELVRNDWEDVKIEVMYKALKCKFSTYPHLKSMLLSTIGTVLVEASPHDLFWGGGREGEGLNYLGRLLMQLRSEYLGESSVSAEKTSSA.

The transit peptide at 1 to 17 (MALSFRISSSSPLICRA) directs the protein to the chloroplast. In terms of domain architecture, CMP/dCMP-type deaminase spans 30 to 152 (TTDAAFIRRA…ELRSHGIEVN (123 aa)).

This sequence in the C-terminal section; belongs to the YbiA family.

The protein resides in the plastid. It localises to the chloroplast. The enzyme catalyses 5-amino-6-(5-phospho-D-ribitylamino)uracil + NADP(+) = 5-amino-6-(5-phospho-D-ribosylamino)uracil + NADPH + H(+). The catalysed reaction is 2,5-diamino-6-hydroxy-4-(5-phosphoribosylamino)-pyrimidine + H2O = 2,5,6-triamino-4-hydroxypyrimidine + D-ribose 5-phosphate. It carries out the reaction 5-amino-6-(5-phospho-D-ribosylamino)uracil + H2O = 5,6-diaminouracil + D-ribose 5-phosphate. The protein operates within cofactor biosynthesis; riboflavin biosynthesis; 5-amino-6-(D-ribitylamino)uracil from GTP: step 3/4. Pyrimidine reductase involved in the riboflavin biosynthesis pathway. Also has a non-functional N-terminal deaminase domain that lacks the catalytically essential zinc-binding residues. In terms of biological role, catalyzes the hydrolysis of the N-glycosidic bond in the first two intermediates of riboflavin biosynthesis, which are highly reactive metabolites, yielding relatively innocuous products. Thus, can divert a surplus of harmful intermediates into relatively harmless products and pre-empt the damage these intermediates would otherwise do. Helps maintain flavin levels. Has no activity against GTP, nucleoside monophosphates or ADP-ribose. The polypeptide is Riboflavin biosynthesis protein PYRR, chloroplastic (PYRR) (Arabidopsis thaliana (Mouse-ear cress)).